Here is a 710-residue protein sequence, read N- to C-terminus: Serine/threonine-protein phosphatase PP-Z2 (710 aa).

Positions 1–382 (MGNSGSKQHT…ADGDNGSRTN (382 aa)) are disordered. Residue glycine 2 is the site of N-myristoyl glycine attachment. Basic and acidic residues predominate over residues 15-27 (KKDDHDGDRKKTL). Residues 40–49 (SLKSSRSLRS) show a composition bias toward low complexity. Serine 55 and serine 71 each carry phosphoserine. 2 stretches are compositionally biased toward polar residues: residues 62–77 (NVQA…SSTL) and 95–104 (PNNHYLTSHP). 2 stretches are compositionally biased toward low complexity: residues 105 to 125 (SSSR…NNNS) and 143 to 155 (NSTS…SFNS). Residues 160-172 (LTDDDDDRGDDGG) show a composition bias toward acidic residues. A Phosphothreonine modification is found at threonine 161. A phosphoserine mark is found at serine 203 and serine 224. The span at 247-260 (SNRSNSHASSRKSS) shows a compositional bias: low complexity. Residues 261–273 (FGSTGNTAYSTPL) show a composition bias toward polar residues. Threonine 271 is modified (phosphothreonine). The residue at position 275 (serine 275) is a Phosphoserine. A compositionally biased stretch (polar residues) spans 291-302 (DNVNGRGTSPIP). A Phosphoserine modification is found at serine 310. Residues aspartate 454, histidine 456, aspartate 482, and asparagine 514 each contribute to the Mn(2+) site. Catalysis depends on histidine 515, which acts as the Proton donor. Histidine 563 and histidine 638 together coordinate Mn(2+).

Belongs to the PPP phosphatase family. PP-Z subfamily. The cofactor is Mn(2+).

The catalysed reaction is O-phospho-L-seryl-[protein] + H2O = L-seryl-[protein] + phosphate. It carries out the reaction O-phospho-L-threonyl-[protein] + H2O = L-threonyl-[protein] + phosphate. Its function is as follows. Essential for the maintenance of cell size and integrity in response to osmotic stress. This Saccharomyces cerevisiae (strain ATCC 204508 / S288c) (Baker's yeast) protein is Serine/threonine-protein phosphatase PP-Z2 (PPZ2).